A 158-amino-acid chain; its full sequence is MENQKQYPMTQEGFEKLEHELEELKTVKRPEVVEKIKIARSFGDLSENSEYDAAKDEQGFIEQDIQRVENMLRNALIIEDTGNNNEVQLGKTVTIVELPGEEEEEYQIVGSAESDAFKGKISNESPMAKSLIGKKLDDEVRVPLPNGGEINVKIVNIK.

Positions 4 to 75 form a coiled coil; it reads QKQYPMTQEG…QRVENMLRNA (72 aa).

The protein belongs to the GreA/GreB family.

In terms of biological role, necessary for efficient RNA polymerase transcription elongation past template-encoded arresting sites. The arresting sites in DNA have the property of trapping a certain fraction of elongating RNA polymerases that pass through, resulting in locked ternary complexes. Cleavage of the nascent transcript by cleavage factors such as GreA or GreB allows the resumption of elongation from the new 3'terminus. GreA releases sequences of 2 to 3 nucleotides. The polypeptide is Transcription elongation factor GreA (Staphylococcus saprophyticus subsp. saprophyticus (strain ATCC 15305 / DSM 20229 / NCIMB 8711 / NCTC 7292 / S-41)).